The chain runs to 361 residues: tRNA N6-adenosine threonylcarbamoyltransferase (361 aa).

His-110 and His-114 together coordinate Fe cation. Residues 132–136 (LVSGG), Asp-165, Gly-178, Asp-182, and Asn-284 each bind substrate. Fe cation is bound at residue Asp-312.

The protein belongs to the KAE1 / TsaD family. It depends on Fe(2+) as a cofactor.

It localises to the cytoplasm. It catalyses the reaction L-threonylcarbamoyladenylate + adenosine(37) in tRNA = N(6)-L-threonylcarbamoyladenosine(37) in tRNA + AMP + H(+). Its function is as follows. Required for the formation of a threonylcarbamoyl group on adenosine at position 37 (t(6)A37) in tRNAs that read codons beginning with adenine. Is involved in the transfer of the threonylcarbamoyl moiety of threonylcarbamoyl-AMP (TC-AMP) to the N6 group of A37, together with TsaE and TsaB. TsaD likely plays a direct catalytic role in this reaction. In Desulfovibrio desulfuricans (strain ATCC 27774 / DSM 6949 / MB), this protein is tRNA N6-adenosine threonylcarbamoyltransferase.